A 514-amino-acid polypeptide reads, in one-letter code: Alpha-1B adrenergic receptor (514 aa).

Residues 1–45 (MNPDLDTGHNTSAPAHWGELKDANFTGPNQTSSNSTLPQLDVTRA) lie on the Extracellular side of the membrane. N-linked (GlcNAc...) asparagine glycosylation is found at N10, N24, N29, and N34. The chain crosses the membrane as a helical span at residues 46 to 69 (ISVGCLGAFILFAIVGNILVILSV). The Cytoplasmic portion of the chain corresponds to 70–82 (ACNRHLRTPTNYF). A helical membrane pass occupies residues 83–104 (IVNLAIADLLLSFTDLPFSATL). Over 105-114 (EVLGYWVLGR) the chain is Extracellular. Residues 115-140 (IFCDIWAAVDVLCCTASILSLCAISI) traverse the membrane as a helical segment. Cysteines 117 and 194 form a disulfide. The Cytoplasmic segment spans residues 141–160 (DRYIGVRYSLQYPTLVTRRK). The helical transmembrane segment at 161–183 (AILALLSVWVLSTVISIGPLLGW) threads the bilayer. Residues 184–200 (KEPAPNDDKECGVTEEP) lie on the Extracellular side of the membrane. The chain crosses the membrane as a helical span at residues 201–223 (FYALFSSLGSFYIPLAVILVMYC). Over 224–294 (RVYIVAKRTT…FSREKKAAKT (71 aa)) the chain is Cytoplasmic. Residue T263 is modified to Phosphothreonine. Residues 295-318 (LGIVVGMFILCWLPFFIALPLGSL) form a helical membrane-spanning segment. The Extracellular segment spans residues 319-325 (FSTLKPP). A helical transmembrane segment spans residues 326-350 (DAVFKVVFWLGYFNSCLNPIIYPCS). The Cytoplasmic segment spans residues 351-514 (SKEFKRAFMR…SNMPLAPGHF (164 aa)). C364 is lipidated: S-palmitoyl cysteine. Positions 367 to 377 (RGGRRRRRRRR) match the Nuclear localization signal motif. Disordered stretches follow at residues 391 to 429 (GGSL…GYLG) and 473 to 514 (LGEP…PGHF). Positions 409-423 (SCMSGSQRTLPSASP) are enriched in polar residues.

This sequence belongs to the G-protein coupled receptor 1 family. Adrenergic receptor subfamily. ADRA1B sub-subfamily. Homo- and heterooligomer. Heterooligomerizes with ADRA1B homooligomers in cardiac myocytes. Interacts with CAVIN4.

The protein resides in the nucleus membrane. The protein localises to the cell membrane. It is found in the cytoplasm. It localises to the membrane. Its subcellular location is the caveola. This alpha-adrenergic receptor mediates its action by association with G proteins that activate a phosphatidylinositol-calcium second messenger system. Its effect is mediated by G(q) and G(11) proteins. Nuclear ADRA1A-ADRA1B heterooligomers regulate phenylephrine (PE)-stimulated ERK signaling in cardiac myocytes. This is Alpha-1B adrenergic receptor (Adra1b) from Mus musculus (Mouse).